We begin with the raw amino-acid sequence, 246 residues long: Probable transcriptional regulatory protein YebC (246 aa).

The segment at Met-1 to Lys-20 is disordered.

It belongs to the TACO1 family.

The protein resides in the cytoplasm. This is Probable transcriptional regulatory protein YebC from Shigella dysenteriae serotype 1 (strain Sd197).